Consider the following 214-residue polypeptide: MIENLSKLISEKVSSELNYDNERKEIIQYGTYALIQTLISIISVFIIGLLFNIALEALIFLFTASILRKYSGGAHSESSNVCTLLGIIISICIGFLVKSSFFTKMNFEIIVFIGIVIFVFGYFIVFKFAPVDTKNKPIKTEKKKKRMKKGSLKILTIYLFIEILSIILYYNLGWSLVKSVMLSIILGVAWQCITLTYIGNILLKTIDSFTNKLL.

The next 5 helical transmembrane spans lie at 41–61 (IISV…LIFL), 82–102 (CTLL…SSFF), 109–129 (IIVF…FKFA), 154–174 (ILTI…NLGW), and 182–202 (LSII…GNIL).

Belongs to the AgrB family.

The protein localises to the cell membrane. In terms of biological role, may be involved in the proteolytic processing of a quorum sensing system signal molecule precursor. This is Putative AgrB-like protein from Clostridium perfringens (strain SM101 / Type A).